A 370-amino-acid chain; its full sequence is MAKVSLEKLLRIPPSLTQSISQTKVDYLNLGHSGLRVSRPILGGLHLGSRKWLPWVLDEEKALPILKAAYDLGVNTWDTANVYSNGESERIIAKALSKYKIPRNKVVLMTKCYRVMSDPERFDPGSGVTMHHELADYSKDYVNQWGLSRRALFSAVEASLDRLNTSYIDVLQIHRFDHTVPPEETMSALNDLIRAGMVRYIGASSMWTFQFATLQHIAETKGLTKFISMQNHYNLIYREEEREMNQYCKMTGVGLIPWGPLASGRLARRPTQEEGSLRASCSAHGSLYESDDYNVDRIIQRVAEIAEKRGWPMSHVSLAWLNRRVTAPIIGFGSVGRIEEALAARGKELSRDEEQYLEELYVPQRIQGHS.

D78 is a binding site for NADP(+). The active-site Proton donor is the Y83. Position 174 (H174) interacts with substrate. Residues 204-205, Q230, 259-269, and 333-341 contribute to the NADP(+) site; these read SS, GPLASGRLARR, and GSVGRIEEA.

Belongs to the aldo/keto reductase family.

Its pathway is secondary metabolite biosynthesis. Aldo-keto reductase; part of the gene cluster that mediates the biosynthesis of destruxins, insecticidal cyclic hexadepsipeptides which induce flaccid paralysis and visceral muscle contraction in insects through targeting the calcium channels and vacuolar-type ATPases. The aldo-keto reductase dtxS3 converts alpha-ketoisocaproic acid from deaminated leucine into alpha-hydroxyisocaproic acid (HIC), which is the first substrate for destruxin assembly by dtxS1. L-aspartate decarboxylase dtxS4 converts aspartic acid into beta-alanine, the last substrate for the destruxin assembly line performed by dtxS1. The nonribosomal peptide synthetase dtxS1 synthesizes destruxins B and B2, whereas the cytochrome P450 monooxygenase dtxS2 is required to convert destruxin B into other destruxin derivatives, including destructins C, D, A and E. Destruxin E-diol (ED) is further produced in a non-enzymatic manner from destruxin E. Destruxins play an important role in virulence and escape from insect host immune defenses. In Metarhizium robertsii (strain ARSEF 23 / ATCC MYA-3075) (Metarhizium anisopliae (strain ARSEF 23)), this protein is Aldo-keto reductase dtxS3.